Consider the following 447-residue polypeptide: Dirigent protein 10 (447 aa).

Residues 1 to 21 (MAGQKILSLLVIALVVTFAAA) form the signal peptide. Residues 74–85 (SGSTGSGLGAGT) are compositionally biased toward gly residues. Positions 74-123 (SGSTGSGLGAGTGSIPSSGSGPGLLPTASSVPGSLAGGGSGSLPTTGSAT) are disordered. Residues 86 to 107 (GSIPSSGSGPGLLPTASSVPGS) are compositionally biased toward low complexity.

It belongs to the plant dirigent protein family. In terms of assembly, homodimer. As to expression, in roots, mostly detected in root endodermis and quiescent center, and, to a lower extent, in root stele and cortex. Expressed in root vascular cylinder, flowers, siliques, cotyledon and leaf veins, and leaf margins. Present in the basal region of rosette leaf trichomes and in developing xylem.

It localises to the secreted. It is found in the extracellular space. The protein resides in the apoplast. Its function is as follows. Dirigent proteins impart stereoselectivity on the phenoxy radical-coupling reaction, yielding optically active lignans from two molecules of coniferyl alcohol in the biosynthesis of lignans, flavonolignans, and alkaloids and thus plays a central role in plant secondary metabolism. Regulates suberin accumulation in roots. The protein is Dirigent protein 10 (DIR10) of Arabidopsis thaliana (Mouse-ear cress).